A 170-amino-acid polypeptide reads, in one-letter code: ATP synthase subunit b (170 aa).

The chain crosses the membrane as a helical span at residues 30–50; it reads FFFVLAIFLVVLAVIGTFVVP.

It belongs to the ATPase B chain family. As to quaternary structure, F-type ATPases have 2 components, F(1) - the catalytic core - and F(0) - the membrane proton channel. F(1) has five subunits: alpha(3), beta(3), gamma(1), delta(1), epsilon(1). F(0) has three main subunits: a(1), b(2) and c(10-14). The alpha and beta chains form an alternating ring which encloses part of the gamma chain. F(1) is attached to F(0) by a central stalk formed by the gamma and epsilon chains, while a peripheral stalk is formed by the delta and b chains.

The protein resides in the cell membrane. F(1)F(0) ATP synthase produces ATP from ADP in the presence of a proton or sodium gradient. F-type ATPases consist of two structural domains, F(1) containing the extramembraneous catalytic core and F(0) containing the membrane proton channel, linked together by a central stalk and a peripheral stalk. During catalysis, ATP synthesis in the catalytic domain of F(1) is coupled via a rotary mechanism of the central stalk subunits to proton translocation. Functionally, component of the F(0) channel, it forms part of the peripheral stalk, linking F(1) to F(0). The chain is ATP synthase subunit b from Mycobacterium marinum (strain ATCC BAA-535 / M).